The chain runs to 278 residues: Elongation factor Ts (278 aa).

Positions 82-85 are involved in Mg(2+) ion dislocation from EF-Tu; it reads TDFV.

It belongs to the EF-Ts family.

Its subcellular location is the cytoplasm. Associates with the EF-Tu.GDP complex and induces the exchange of GDP to GTP. It remains bound to the aminoacyl-tRNA.EF-Tu.GTP complex up to the GTP hydrolysis stage on the ribosome. This Streptomyces griseus subsp. griseus (strain JCM 4626 / CBS 651.72 / NBRC 13350 / KCC S-0626 / ISP 5235) protein is Elongation factor Ts.